The sequence spans 349 residues: MEFATVSPPDPGTAAAARARQDTLTKPRGALGRLEDLSVWIAACQGQCPPRQFERARVVVFAGDHGVARCGVSAYPPEVTAQMVANFDAGGAAINALAGVAGASVRVADLAVDADPPDDRIGAHKVRRGSGDITVQDALTAEETERALSAGAAIADEEVDAGADLLIAGDMGIGNTTAAAVLVAALTNVEPVVAVGFGTGIDDAGWARKTAAVRDALFRARRVLPDPVALLRCAGGADLAALAGFCAQAAVRRTPLLLDGMAVTAAALVAEHLAPGARLWWQAGHRSTEPGHALALTALDLEPILDLRMRLGEGTGAALALPIVRAAVAALSSMATFAQAGVSDPSAHP.

The disordered stretch occupies residues 1 to 20 (MEFATVSPPDPGTAAAARAR). Catalysis depends on Glu-313, which acts as the Proton acceptor.

Belongs to the CobT family.

The catalysed reaction is 5,6-dimethylbenzimidazole + nicotinate beta-D-ribonucleotide = alpha-ribazole 5'-phosphate + nicotinate + H(+). Its pathway is nucleoside biosynthesis; alpha-ribazole biosynthesis; alpha-ribazole from 5,6-dimethylbenzimidazole: step 1/2. Its function is as follows. Catalyzes the synthesis of alpha-ribazole-5'-phosphate from nicotinate mononucleotide (NAMN) and 5,6-dimethylbenzimidazole (DMB). In Mycolicibacterium paratuberculosis (strain ATCC BAA-968 / K-10) (Mycobacterium paratuberculosis), this protein is Nicotinate-nucleotide--dimethylbenzimidazole phosphoribosyltransferase.